A 131-amino-acid polypeptide reads, in one-letter code: Small ribosomal subunit protein uS8 (131 aa).

The protein belongs to the universal ribosomal protein uS8 family. In terms of assembly, part of the 30S ribosomal subunit. Contacts proteins S5 and S12.

In terms of biological role, one of the primary rRNA binding proteins, it binds directly to 16S rRNA central domain where it helps coordinate assembly of the platform of the 30S subunit. The protein is Small ribosomal subunit protein uS8 of Paracidovorax citrulli (strain AAC00-1) (Acidovorax citrulli).